Reading from the N-terminus, the 70-residue chain is Sec-independent protein translocase protein TatA (70 aa).

Residues 1-21 form a helical membrane-spanning segment; it reads MGSFSVWHWLIVLVIVLVLFG. The tract at residues 42–70 is disordered; it reads GMADEDQTPPPADANANAKTVDHKADEIK. Over residues 61-70 the composition is skewed to basic and acidic residues; sequence TVDHKADEIK.

The protein belongs to the TatA/E family. In terms of assembly, the Tat system comprises two distinct complexes: a TatABC complex, containing multiple copies of TatA, TatB and TatC subunits, and a separate TatA complex, containing only TatA subunits. Substrates initially bind to the TatABC complex, which probably triggers association of the separate TatA complex to form the active translocon.

The protein localises to the cell inner membrane. Its function is as follows. Part of the twin-arginine translocation (Tat) system that transports large folded proteins containing a characteristic twin-arginine motif in their signal peptide across membranes. TatA could form the protein-conducting channel of the Tat system. The protein is Sec-independent protein translocase protein TatA of Agrobacterium fabrum (strain C58 / ATCC 33970) (Agrobacterium tumefaciens (strain C58)).